A 279-amino-acid chain; its full sequence is Urease accessory protein UreD (279 aa).

Belongs to the UreD family. In terms of assembly, ureD, UreF and UreG form a complex that acts as a GTP-hydrolysis-dependent molecular chaperone, activating the urease apoprotein by helping to assemble the nickel containing metallocenter of UreC. The UreE protein probably delivers the nickel.

The protein localises to the cytoplasm. In terms of biological role, required for maturation of urease via the functional incorporation of the urease nickel metallocenter. The polypeptide is Urease accessory protein UreD (Pseudomonas fluorescens (strain Pf0-1)).